The sequence spans 117 residues: Minor capsid protein p17 (117 aa).

Asparagine 12 is a glycosylation site (N-linked (GlcNAc...) asparagine; by host). The chain crosses the membrane as a helical span at residues 39–59; that stretch reads AILLGILILLVIILIIVAIVY. The segment at 96–117 is disordered; it reads KNSTSQQSHIPSDEQLAELAHS. The N-linked (GlcNAc...) asparagine; by host glycan is linked to asparagine 97.

The protein belongs to the asfivirus minor capsid protein p17 family. As to quaternary structure, interacts with the minor capsid protein M1249L and with the hexon capsid protein p72 capsomers; these interactions form a rigid zipper structure that stabilizes the capsomers. Interacts with host STING1.

Its subcellular location is the virion membrane. It localises to the host endoplasmic reticulum membrane. Its function is as follows. Together with the penton and the other minor capsid proteins (M1249L, p49), forms a complicated network immediately below the outer capsid shell, stabilizing the whole capsid. Three copies of p17 encircle each p72 capsomer in the inner capsid shell, anchoring p72 capsomers on the inner membrane. Required for the assembly of the capsid and icosahedral morphogenesis. Additionally, inhibits the host cGAS-STING pathway through its interaction with STING1 and subsequent interference of the recruitment of downstream components TBK1 and IKBKE. The polypeptide is Minor capsid protein p17 (African swine fever virus (isolate Warthog/Namibia/Wart80/1980) (ASFV)).